A 201-amino-acid chain; its full sequence is Putative manganese efflux pump MntP 2 (201 aa).

The next 6 helical transmembrane spans lie at 3 to 23 (LISV…VSIT), 39 to 59 (IGLF…SIGI), 65 to 85 (IAAL…GKMI), 116 to 136 (LILL…SFAF), 141 to 161 (IINT…IGVM), and 176 to 196 (ILGG…HTNI).

The protein belongs to the MntP (TC 9.B.29) family.

It localises to the cell membrane. Probably functions as a manganese efflux pump. This is Putative manganese efflux pump MntP 2 from Clostridium botulinum (strain Hall / ATCC 3502 / NCTC 13319 / Type A).